A 684-amino-acid polypeptide reads, in one-letter code: Probable potassium transport system protein Kup (684 aa).

The next 12 helical transmembrane spans lie at 19-39 (ALLV…LYVM), 61-81 (VSLI…LIAL), 104-124 (WLVL…MLTP), 151-171 (QVIW…RFGT), 177-197 (AFGP…FIAL), 223-243 (MGLF…ALYS), 255-275 (LSWP…AVWL), 303-323 (LGAI…LISG), 352-372 (LYIP…IGYF), 381-401 (AYGL…YQYL), 407-427 (PAVV…VFFI), and 433-453 (FLHG…VMYV).

This sequence belongs to the HAK/KUP transporter (TC 2.A.72) family.

Its subcellular location is the cell membrane. The catalysed reaction is K(+)(in) + H(+)(in) = K(+)(out) + H(+)(out). Transport of potassium into the cell. Likely operates as a K(+):H(+) symporter. The protein is Probable potassium transport system protein Kup of Lacticaseibacillus paracasei (strain ATCC 334 / BCRC 17002 / CCUG 31169 / CIP 107868 / KCTC 3260 / NRRL B-441) (Lactobacillus paracasei).